The following is a 92-amino-acid chain: UPF0250 protein XCC3453 (92 aa).

Belongs to the UPF0250 family.

The chain is UPF0250 protein XCC3453 from Xanthomonas campestris pv. campestris (strain ATCC 33913 / DSM 3586 / NCPPB 528 / LMG 568 / P 25).